A 144-amino-acid polypeptide reads, in one-letter code: Large ribosomal subunit protein uL15 (144 aa).

The segment covering 1-18 has biased composition (basic and acidic residues); sequence MRLNDLHPAEGSRPEGKR. The tract at residues 1-58 is disordered; that stretch reads MRLNDLHPAEGSRPEGKRVGRGIGSGLGKTGGRGHKGQKSRSGGSVKPGFEGGQMPLQ. The span at 21–31 shows a compositional bias: gly residues; the sequence is RGIGSGLGKTG.

It belongs to the universal ribosomal protein uL15 family. Part of the 50S ribosomal subunit.

Functionally, binds to the 23S rRNA. In Alcanivorax borkumensis (strain ATCC 700651 / DSM 11573 / NCIMB 13689 / SK2), this protein is Large ribosomal subunit protein uL15.